Consider the following 315-residue polypeptide: DNA-directed RNA polymerase subunit alpha (315 aa).

Positions 1 to 228 (MLEIEKPKIE…EHFKLFMTLT (228 aa)) are alpha N-terminal domain (alpha-NTD). Residues 245–315 (KEKVLEMAIE…LGLSLKQNED (71 aa)) form an alpha C-terminal domain (alpha-CTD) region.

This sequence belongs to the RNA polymerase alpha chain family. Homodimer. The RNAP catalytic core consists of 2 alpha, 1 beta, 1 beta' and 1 omega subunit. When a sigma factor is associated with the core the holoenzyme is formed, which can initiate transcription.

It catalyses the reaction RNA(n) + a ribonucleoside 5'-triphosphate = RNA(n+1) + diphosphate. Its function is as follows. DNA-dependent RNA polymerase catalyzes the transcription of DNA into RNA using the four ribonucleoside triphosphates as substrates. In Clostridium kluyveri (strain NBRC 12016), this protein is DNA-directed RNA polymerase subunit alpha.